The following is a 623-amino-acid chain: AFI1-like protein C776.06c (623 aa).

Residues 5 to 204 form the uDENN domain; the sequence is DYLLTAIFDP…IDNIPKPGSE (200 aa). Positions 248-386 constitute a cDENN domain; the sequence is ISNLINTFID…SDATTTMDTK (139 aa). The region spanning 388-476 is the dDENN domain; that stretch reads LFNNTSPFTP…WSWDNDDEKV (89 aa).

This sequence belongs to the AFI1/mesA family.

The protein localises to the cytoplasm. Its subcellular location is the cell cortex. The protein resides in the nucleus. Its function is as follows. Involved in polarity establishment. In Schizosaccharomyces pombe (strain 972 / ATCC 24843) (Fission yeast), this protein is AFI1-like protein C776.06c.